Reading from the N-terminus, the 345-residue chain is S-adenosylmethionine:tRNA ribosyltransferase-isomerase (345 aa).

This sequence belongs to the QueA family. As to quaternary structure, monomer.

Its subcellular location is the cytoplasm. The catalysed reaction is 7-aminomethyl-7-carbaguanosine(34) in tRNA + S-adenosyl-L-methionine = epoxyqueuosine(34) in tRNA + adenine + L-methionine + 2 H(+). Its pathway is tRNA modification; tRNA-queuosine biosynthesis. Transfers and isomerizes the ribose moiety from AdoMet to the 7-aminomethyl group of 7-deazaguanine (preQ1-tRNA) to give epoxyqueuosine (oQ-tRNA). The protein is S-adenosylmethionine:tRNA ribosyltransferase-isomerase of Shewanella sp. (strain MR-7).